The primary structure comprises 789 residues: Trans-4-hydroxy-L-proline dehydratase (789 aa).

A PFL domain is found at 7–663 (ERTKKLREES…IMGASPNGRL (657 aa)). Cys-434 serves as the catalytic Cysteine radical intermediate. The Proton acceptor role is filled by Glu-436. The 120-residue stretch at 670–789 (EGISPEKGGD…EIIGRTEQTF (120 aa)) folds into the Glycine radical domain. Gly-765 carries the glycine radical modification.

It belongs to the glycyl radical enzyme (GRE) family. HYPD subfamily. Post-translationally, requires the activating protein PflE to generate the key active site glycyl radical on Gly-765 that is involved in catalysis.

The enzyme catalyses trans-4-hydroxy-L-proline = (S)-1-pyrroline-5-carboxylate + H2O + H(+). Its function is as follows. Glycine radical enzyme that catalyzes the dehydration of the non-proteinogenic amino acid trans-4-hydroxy-L-proline (Hyp) to produce delta(1)-pyrroline-5-carboxylate (P5C). Is involved in the anaerobic degradation of 4-hydroxyproline. This Clostridioides difficile (Peptoclostridium difficile) protein is Trans-4-hydroxy-L-proline dehydratase.